The primary structure comprises 420 residues: Glutamate dehydrogenase (420 aa).

Residue Lys105 is part of the active site. Residue 220-226 (GYGNAGY) coordinates NAD(+).

It belongs to the Glu/Leu/Phe/Val dehydrogenases family. Homohexamer.

It localises to the cytoplasm. The catalysed reaction is L-glutamate + NAD(+) + H2O = 2-oxoglutarate + NH4(+) + NADH + H(+). The enzyme catalyses L-glutamate + NADP(+) + H2O = 2-oxoglutarate + NH4(+) + NADPH + H(+). The polypeptide is Glutamate dehydrogenase (gdhA) (Pyrococcus endeavori).